The following is a 392-amino-acid chain: MTIRNQRLSLLKQPISSTLNQHLIDYPTPSNLSYWWGFGSLAGICLVIQIVTGVFLAMHYTPHVDLAFNSVEHVMRDVEGGWLLRYMHANGASMFLIVVHLHIFRGLYHASYSSPREFVRCLGVVIFLLMIVTAFTGYVPPWGQMSFWGATVITSLASAIPVVGDTIVTWLWGGFSVDNATLNRFFSLHHLLPFILVGASLLHLAALHQYGSNNPLGVHSEMDQISFYPYFYVKDLVGWVAFAIFFSIWIFYAPNVLGHPDNYIPANPMPTPPHIVPEWYFLPIHAILRSIPDKSGGVAAIAPVFICLLALPFFKSMYVRSSSFRPIHQGIFWLLLADRLLLGWIGCQPVEAPFVTIGQIPPFVFFLFFAITPIPGRVGRGIPNSYTDETDQ.

4 consecutive transmembrane segments (helical) span residues 38–58 (FGSL…FLAM), 82–104 (WLLR…LHIF), 119–139 (VRCL…TGYV), and 185–205 (FFSL…LHLA). His-88 and His-102 together coordinate heme b. Residues His-189 and His-203 each coordinate heme b. His-208 provides a ligand contact to a ubiquinone. Helical transmembrane passes span 231-251 (FYVK…IWIF), 295-315 (SGGV…PFFK), 327-347 (IHQG…WIGC), and 354-373 (FVTI…AITP).

This sequence belongs to the cytochrome b family. As to quaternary structure, the main subunits of complex b-c1 are: cytochrome b, cytochrome c1 and the Rieske protein. It depends on heme b as a cofactor.

It is found in the mitochondrion inner membrane. Component of the ubiquinol-cytochrome c reductase complex (complex III or cytochrome b-c1 complex) that is part of the mitochondrial respiratory chain. The b-c1 complex mediates electron transfer from ubiquinol to cytochrome c. Contributes to the generation of a proton gradient across the mitochondrial membrane that is then used for ATP synthesis. The protein is Cytochrome b (MT-CYB) of Vicia faba (Broad bean).